We begin with the raw amino-acid sequence, 352 residues long: Histidine biosynthesis bifunctional protein HisB (352 aa).

A histidinol-phosphatase region spans residues 1-163; it reads MKKILFIDRD…MVASAIINDA (163 aa). The active-site Nucleophile is aspartate 8. Mg(2+) contacts are provided by aspartate 8 and aspartate 10. The active-site Proton donor is aspartate 10. 4 residues coordinate Zn(2+): cysteine 91, histidine 93, cysteine 99, and cysteine 101. Aspartate 128 contacts Mg(2+). The segment at 164-352 is imidazoleglycerol-phosphate dehydratase; that stretch reads RKASVQRKTK…NYLPSTKGVL (189 aa).

The protein in the N-terminal section; belongs to the histidinol-phosphatase family. This sequence in the C-terminal section; belongs to the imidazoleglycerol-phosphate dehydratase family. Requires Mg(2+) as cofactor. The cofactor is Zn(2+).

The protein resides in the cytoplasm. It catalyses the reaction D-erythro-1-(imidazol-4-yl)glycerol 3-phosphate = 3-(imidazol-4-yl)-2-oxopropyl phosphate + H2O. The enzyme catalyses L-histidinol phosphate + H2O = L-histidinol + phosphate. Its pathway is amino-acid biosynthesis; L-histidine biosynthesis; L-histidine from 5-phospho-alpha-D-ribose 1-diphosphate: step 6/9. It participates in amino-acid biosynthesis; L-histidine biosynthesis; L-histidine from 5-phospho-alpha-D-ribose 1-diphosphate: step 8/9. This Legionella pneumophila (strain Lens) protein is Histidine biosynthesis bifunctional protein HisB.